A 293-amino-acid polypeptide reads, in one-letter code: MDIALAIKALILGIVEGLTEFLPISSTGHLILAGQLLDFNDEKGKIFEIVIQFGAILAVCWEFRHKIIDVIKGLPNDPRQQRFAINVIVATIPAITLALIFGKAIKAHLFNPIVVASAFILGGFVILWAEWRERHRGETHDPRANALLEAAKAGAPRIETLDDLRISDAIKVGFAQCFALIPGTSRSGSTIIGGLLFGLSRKVATEFSFFLAIPVIFGATVYELYKSRALLSADDLSIFAVGFVAAFISAFFCVRWLLKFIATHDFRGFAWYRIIFGIIVLATAYTHLIAWQA.

7 consecutive transmembrane segments (helical) span residues 3–23 (IALAIKALILGIVEGLTEFLP), 43–63 (KGKIFEIVIQFGAILAVCWEF), 85–105 (INVIVATIPAITLALIFGKAI), 109–129 (LFNPIVVASAFILGGFVILWA), 203–223 (VATEFSFFLAIPVIFGATVYE), 238–258 (IFAVGFVAAFISAFFCVRWLL), and 269–289 (FAWYRIIFGIIVLATAYTHLI).

Belongs to the UppP family.

The protein resides in the cell inner membrane. It carries out the reaction di-trans,octa-cis-undecaprenyl diphosphate + H2O = di-trans,octa-cis-undecaprenyl phosphate + phosphate + H(+). Its function is as follows. Catalyzes the dephosphorylation of undecaprenyl diphosphate (UPP). Confers resistance to bacitracin. The sequence is that of Undecaprenyl-diphosphatase from Ralstonia pickettii (strain 12J).